Here is a 1050-residue protein sequence, read N- to C-terminus: Zinc finger and BTB domain-containing protein 11 (1050 aa).

A compositionally biased stretch (acidic residues) spans 143–156 (LDSGEESNESEDDL). Residues 143–173 (LDSGEESNESEDDLSNFTSPPSTASKSSKKK) are disordered. A compositionally biased stretch (low complexity) spans 157–168 (SNFTSPPSTASK). The BTB domain occupies 214 to 282 (CDVTLLIEGE…AYTSVLSFDF (69 aa)). Disordered regions lie at residues 373 to 514 (AEQN…EGGY) and 543 to 563 (LVQRGKKMKQPKRDAKESTEE). Low complexity predominate over residues 378–399 (EPEQQPAPQASPEAEASVSPVE). Basic and acidic residues-rich tracts occupy residues 478-501 (SKDEDTLTEATEKTDSGPDDDTYR) and 553-563 (PKRDAKESTEE). 2 consecutive C2H2-type zinc fingers follow at residues 566 to 588 (HKCGECGMVFPRRYAFIMHTLKH) and 594 to 616 (YKCPLCKKQFQYSASLRAHLIRH). A disordered region spans residues 617–641 (TRKEAPTSSSSNSTSTEASGGSSEK). The segment covering 623 to 638 (TSSSSNSTSTEASGGS) has biased composition (low complexity). 10 consecutive C2H2-type zinc fingers follow at residues 648-670 (FICSICGRTLPKLYSLRIHMLKH), 676-698 (HACQVCGKTFIYKHGLKLHQSLH), 704-726 (FQCELCVKSFVTKRSLQEHMSIH), 732-754 (YFCSICGKSFHRGSGLSKHLKKH), 763-785 (YHCTQCEKSFFEARDLRQHMNKH), 791-813 (FQCQFCDKCYSWKKDWYSHVKSH), 819-843 (YRCNICGKEFYEKALFRRHVKKATH), 855-877 (RVCDQCGRKFTQLREYRRHMNNH), 883-905 (FECLTCGVAWADARSLKRHVRTH), and 911-934 (YVCPVCSEAYIDARTLRKHMTKFH).

It is found in the nucleus. Its subcellular location is the nucleolus. Functionally, may be involved in transcriptional regulation. This chain is Zinc finger and BTB domain-containing protein 11, found in Mus musculus (Mouse).